Here is a 1356-residue protein sequence, read N- to C-terminus: DNA-directed RNA polymerase subunit beta (1356 aa).

This sequence belongs to the RNA polymerase beta chain family. In terms of assembly, the RNAP catalytic core consists of 2 alpha, 1 beta, 1 beta' and 1 omega subunit. When a sigma factor is associated with the core the holoenzyme is formed, which can initiate transcription.

The catalysed reaction is RNA(n) + a ribonucleoside 5'-triphosphate = RNA(n+1) + diphosphate. Functionally, DNA-dependent RNA polymerase catalyzes the transcription of DNA into RNA using the four ribonucleoside triphosphates as substrates. In Caulobacter vibrioides (strain ATCC 19089 / CIP 103742 / CB 15) (Caulobacter crescentus), this protein is DNA-directed RNA polymerase subunit beta.